A 235-amino-acid chain; its full sequence is Large ribosomal subunit protein uL1 (235 aa).

This sequence belongs to the universal ribosomal protein uL1 family. In terms of assembly, part of the 50S ribosomal subunit.

Its function is as follows. Binds directly to 23S rRNA. The L1 stalk is quite mobile in the ribosome, and is involved in E site tRNA release. Protein L1 is also a translational repressor protein, it controls the translation of the L11 operon by binding to its mRNA. The chain is Large ribosomal subunit protein uL1 from Mycobacteroides abscessus (strain ATCC 19977 / DSM 44196 / CCUG 20993 / CIP 104536 / JCM 13569 / NCTC 13031 / TMC 1543 / L948) (Mycobacterium abscessus).